The sequence spans 167 residues: Transcription antitermination protein NusB (167 aa).

Belongs to the NusB family.

Its function is as follows. Involved in transcription antitermination. Required for transcription of ribosomal RNA (rRNA) genes. Binds specifically to the boxA antiterminator sequence of the ribosomal RNA (rrn) operons. The sequence is that of Transcription antitermination protein NusB from Nitrosomonas europaea (strain ATCC 19718 / CIP 103999 / KCTC 2705 / NBRC 14298).